The sequence spans 80 residues: MSFEVLEKLEAKIQTAVDTIALLQMEVDELKEDKAKLETEANELRAQREQLEQKAQQTQQEHAQWQERIRALLGKMEDVE.

The stretch at 3–80 (FEVLEKLEAK…ALLGKMEDVE (78 aa)) forms a coiled coil.

This sequence belongs to the ZapB family. Homodimer. The ends of the coiled-coil dimer bind to each other, forming polymers. Interacts with FtsZ.

Its subcellular location is the cytoplasm. Functionally, non-essential, abundant cell division factor that is required for proper Z-ring formation. It is recruited early to the divisome by direct interaction with FtsZ, stimulating Z-ring assembly and thereby promoting cell division earlier in the cell cycle. Its recruitment to the Z-ring requires functional FtsA or ZipA. The sequence is that of Cell division protein ZapB from Vibrio vulnificus (strain CMCP6).